The chain runs to 253 residues: Adenosylcobinamide-GDP ribazoletransferase (253 aa).

The next 4 membrane-spanning stretches (helical) occupy residues 33 to 53 (ISPI…YLIL), 106 to 126 (VGSG…VALL), 132 to 152 (LYTI…SLYI), and 178 to 198 (ILLL…FIIF).

It belongs to the CobS family. Mg(2+) serves as cofactor.

The protein localises to the cell membrane. The enzyme catalyses alpha-ribazole + adenosylcob(III)inamide-GDP = adenosylcob(III)alamin + GMP + H(+). It carries out the reaction alpha-ribazole 5'-phosphate + adenosylcob(III)inamide-GDP = adenosylcob(III)alamin 5'-phosphate + GMP + H(+). It participates in cofactor biosynthesis; adenosylcobalamin biosynthesis; adenosylcobalamin from cob(II)yrinate a,c-diamide: step 7/7. Functionally, joins adenosylcobinamide-GDP and alpha-ribazole to generate adenosylcobalamin (Ado-cobalamin). Also synthesizes adenosylcobalamin 5'-phosphate from adenosylcobinamide-GDP and alpha-ribazole 5'-phosphate. This chain is Adenosylcobinamide-GDP ribazoletransferase, found in Saccharolobus solfataricus (strain ATCC 35092 / DSM 1617 / JCM 11322 / P2) (Sulfolobus solfataricus).